Here is a 710-residue protein sequence, read N- to C-terminus: Solute carrier organic anion transporter family member 3A1 (710 aa).

Position 1 is an N-acetylmethionine (Met-1). Positions 1–25 (MQAKKPGGSSGGGRSGELQGDEAQR) are disordered. Residues 1–40 (MQAKKPGGSSGGGRSGELQGDEAQRNKKKKKKVSCFSNIK) lie on the Cytoplasmic side of the membrane. Residues 41-60 (IFLVSECALMLAQGTVGAYL) form a helical membrane-spanning segment. Over 61-79 (VSVLTTLERRFNLQSADVG) the chain is Extracellular. Residues 80-100 (VIASSFEIGNLALILFVSYFG) traverse the membrane as a helical segment. Topologically, residues 101–106 (ARGHRP) are cytoplasmic. The helical transmembrane segment at 107–131 (RLIGCGGIVMALGALLSALPEFLTH) threads the bilayer. Over 132 to 174 (QYKYEAGEIRWGAEGRDVCAANGSGGDQGPDPDLICRSRTATN) the chain is Extracellular. An N-linked (GlcNAc...) asparagine glycan is attached at Asn-153. The chain crosses the membrane as a helical span at residues 175 to 203 (MMYLLLIGAQVLLGIGATPVQPLGVSYID). Residues 204–222 (DHVRRKDSSLYIGILFTML) are Cytoplasmic-facing. The helical transmembrane segment at 223–243 (VFGPACGFILGSFCTKIYVDA) threads the bilayer. The Extracellular portion of the chain corresponds to 244–261 (VFIDTSNLDITPDDPRWI). Residues 262–286 (GAWWGGFLLCGALLFFSSVLMFGFP) traverse the membrane as a helical segment. Residues 287–344 (QSLPPHSDPALESEQAMLPEREYERPKPSNGVLRHPLEPDSSASCFQQLRVIPKVTKH) lie on the Cytoplasmic side of the membrane. Residues 345–366 (LLSNPVFTCIILAACMEIAVVA) form a helical membrane-spanning segment. The Extracellular segment spans residues 367-386 (GFAAFLGKYLEQQFNLTTSS). Asn-381 carries an N-linked (GlcNAc...) asparagine glycan. The chain crosses the membrane as a helical span at residues 387 to 410 (ANQLLGMTAIPCACLGIFLGGLLV). Residues 411–414 (KKLS) lie on the Cytoplasmic side of the membrane. Residues 415–438 (LSALGAIRMAMLVNLVSTACYVSF) traverse the membrane as a helical segment. The Extracellular portion of the chain corresponds to 439-539 (LFLGCDTGPV…PGCQEAFLTF (101 aa)). N-linked (GlcNAc...) asparagine glycosylation occurs at Asn-457. Residues 465–513 (LDPYSSCNKNCECQTDSFTPVCGADGITYLSACFAGCNSTNLTGCACLM) enclose the Kazal-like domain. Disulfide bonds link Cys-471–Cys-501, Cys-477–Cys-497, and Cys-486–Cys-511. N-linked (GlcNAc...) asparagine glycosylation is found at Asn-502, Asn-505, and Asn-519. A helical membrane pass occupies residues 540 to 562 (LCVMCVCSMIGAMAQTPSVIILI). The Cytoplasmic segment spans residues 563–571 (RTVSPELKS). A helical transmembrane segment spans residues 572-597 (YALGVLFLLLRLLGFIPPPLIFGAGI). Residues 598 to 630 (DSTCLFWSTFCGEQGACALYDNVAYRYLYVSIA) lie on the Extracellular side of the membrane. The chain crosses the membrane as a helical span at residues 631–648 (IALKSFAFLLYTTTWQCL). Over 649-705 (RKNYKRYIKNHEGGLSTSEFFASTLTLDNLGRDPVPANQTHRTKFIYNLEDHEWCEN) the chain is Cytoplasmic.

It belongs to the organo anion transporter (TC 2.A.60) family.

The protein localises to the basolateral cell membrane. It localises to the apical cell membrane. Its subcellular location is the basal cell membrane. It catalyses the reaction L-thyroxine(out) = L-thyroxine(in). It carries out the reaction prostaglandin E1(out) = prostaglandin E1(in). The enzyme catalyses prostaglandin E2(out) = prostaglandin E2(in). The catalysed reaction is prostaglandin F2alpha(out) = prostaglandin F2alpha(in). It catalyses the reaction (5Z,8Z,11Z,14Z)-eicosatetraenoate(out) = (5Z,8Z,11Z,14Z)-eicosatetraenoate(in). It carries out the reaction taurocholate(out) = taurocholate(in). The enzyme catalyses glycocholate(out) = glycocholate(in). The catalysed reaction is estrone 3-sulfate(out) = estrone 3-sulfate(in). It catalyses the reaction argipressin(out) = argipressin(in). In terms of biological role, putative organic anion antiporter with apparent broad substrate specificity. Recognizes various substrates including thyroid hormone L-thyroxine, prostanoids such as prostaglandin E1 and E2, bile acids such as taurocholate, glycolate and glycochenodeoxycholate and peptide hormones such as L-arginine vasopressin, likely operating in a tissue-specific manner. The transport mechanism, its electrogenicity and potential tissue-specific counterions remain to be elucidated. The polypeptide is Solute carrier organic anion transporter family member 3A1 (SLCO3A1) (Bos taurus (Bovine)).